The chain runs to 166 residues: Interferon gamma (166 aa).

Residues 1–23 (MKYTSYILAFQLCIVLGSLGCYC) form the signal peptide. The residue at position 24 (Gln-24) is a Pyrrolidone carboxylic acid. Asn-48, Asn-86, and Asn-120 each carry an N-linked (GlcNAc...) asparagine glycan.

It belongs to the type II (or gamma) interferon family. As to quaternary structure, homodimer. Interacts with IFNGR1 (via extracellular domain); this interaction promotes IFNGR1 dimerization. As to expression, released primarily from activated T lymphocytes.

Its subcellular location is the secreted. Type II interferon produced by immune cells such as T-cells and NK cells that plays crucial roles in antimicrobial, antiviral, and antitumor responses by activating effector immune cells and enhancing antigen presentation. Primarily signals through the JAK-STAT pathway after interaction with its receptor IFNGR1 to affect gene regulation. Upon IFNG binding, IFNGR1 intracellular domain opens out to allow association of downstream signaling components JAK2, JAK1 and STAT1, leading to STAT1 activation, nuclear translocation and transcription of IFNG-regulated genes. Many of the induced genes are transcription factors such as IRF1 that are able to further drive regulation of a next wave of transcription. Plays a role in class I antigen presentation pathway by inducing a replacement of catalytic proteasome subunits with immunoproteasome subunits. In turn, increases the quantity, quality, and repertoire of peptides for class I MHC loading. Increases the efficiency of peptide generation also by inducing the expression of activator PA28 that associates with the proteasome and alters its proteolytic cleavage preference. Up-regulates as well MHC II complexes on the cell surface by promoting expression of several key molecules such as cathepsins B/CTSB, H/CTSH, and L/CTSL. Participates in the regulation of hematopoietic stem cells during development and under homeostatic conditions by affecting their development, quiescence, and differentiation. The polypeptide is Interferon gamma (IFNG) (Saimiri sciureus (Common squirrel monkey)).